The chain runs to 456 residues: Shootin-1 (456 aa).

M1 is modified (N-acetylmethionine). Phosphoserine is present on residues S3 and S4. A coiled-coil region spans residues 7–353 (EKQLQLITSL…RVNQSENSVP (347 aa)). A phosphoserine; by PAK1 mark is found at S101 and S249. Disordered stretches follow at residues 343–405 (KRVN…VTDL) and 418–445 (KKGV…CESA). Residues 352 to 369 (VPPPPPPPPPLPPPPPNP) are compositionally biased toward pro residues. Phosphoserine is present on S375.

Belongs to the shootin family. As to quaternary structure, interacts with L1CAM; this interaction occurs in axonal growth cones. Interacts with actin filament retrograde flow; this interaction is enhanced in a netrin-1- and PAK1-dependent manner and promotes F-actin-substrate coupling and concomitant formation of traction forces at axonal growth cones. Interacts with RUFY3. Interacts with PFN2. Interacts (via N-terminus) with KIF20B; this interaction is direct and promotes the association of SHTN1 to microtubules in primary neurons. Associates with microtubule. Phosphorylated on Ser-101 and Ser-249 by PAK1 through a CDC42- and RAC1-dependent signaling pathway, which enhances its association with F-actin retrograde flow in filopodia and lamellipodia of axonal growth cones. Phosphorylation on Ser-101 and Ser-249 is increased by netrin-1.

It localises to the perikaryon. Its subcellular location is the cell projection. It is found in the axon. The protein localises to the growth cone. The protein resides in the cytoplasm. It localises to the cytoskeleton. Its subcellular location is the filopodium. It is found in the lamellipodium. Involved in the generation of internal asymmetric signals required for neuronal polarization and neurite outgrowth. Mediates netrin-1-induced F-actin-substrate coupling or 'clutch engagement' within the axon growth cone through activation of CDC42, RAC1 and PAK1-dependent signaling pathway, thereby converting the F-actin retrograde flow into traction forces, concomitantly with filopodium extension and axon outgrowth. Plays a role in cytoskeletal organization by regulating the subcellular localization of phosphoinositide 3-kinase (PI3K) activity at the axonal growth cone. Also plays a role in regenerative neurite outgrowth. In the developing cortex, cooperates with KIF20B to promote both the transition from the multipolar to the bipolar stage and the radial migration of cortical neurons from the ventricular zone toward the superficial layer of the neocortex. Involved in the accumulation of phosphatidylinositol 3,4,5-trisphosphate (PIP3) in the growth cone of primary hippocampal neurons. The sequence is that of Shootin-1 from Pongo abelii (Sumatran orangutan).